Reading from the N-terminus, the 75-residue chain is Accessory gland-specific peptide 57Da (75 aa).

The first 19 residues, 1 to 19 (MKFLALFVTLLVVLALVSA), serve as a signal peptide directing secretion. The interval 55–75 (AAPAAAPAAPEAGLADAPAES) is disordered. Positions 56–75 (APAAAPAAPEAGLADAPAES) are enriched in low complexity.

In terms of tissue distribution, lumen fluid of male accessory glands, becomes seminal fluid.

The protein localises to the secreted. In terms of biological role, transferred from male to female during mating and may affect egglaying and behavior after mating. The polypeptide is Accessory gland-specific peptide 57Da (Mst57Da) (Drosophila melanogaster (Fruit fly)).